The primary structure comprises 99 residues: Large ribosomal subunit protein bL27 (99 aa).

Positions M1–F9 are excised as a propeptide.

The protein belongs to the bacterial ribosomal protein bL27 family. The N-terminus is cleaved by ribosomal processing cysteine protease Prp.

In Clostridium beijerinckii (strain ATCC 51743 / NCIMB 8052) (Clostridium acetobutylicum), this protein is Large ribosomal subunit protein bL27.